The following is a 492-amino-acid chain: MPPRRSHKKSRAGCRRCKNRKIKCDEVHPRCGNCAKHGVPCDFSNPDVLEELAISTNTSTESVGAPTPSPAPTVNFNSAPRTPLTRPRAPSSPARAPRPNPSPPTSVYSQPSISSSTNTIDHGERMLELRLMHHYTNVTSKTLLTNSPAAEDIWQRAVPQMAFSGNGKTYLADAILSVAALHLRSMSPNDKALVRASHAYSASSLSAFGASLGAGITPENAEALFLTATLIAFQASASRIFVKDDGDAAPGDPTVRYVPPLSWFHAFQGVKTVVANSWQWIHHSDIVKVIIDSQPSFQLNLNPRSPDSFFGHMLEGLADELSNEDPRLVASTTQAYSHAVSVLNWAHKNYHAAAALTFTATVSKRYVDLVDARRPRALAILACFFALLKRMDNVWWLQDVARREVMGLVSLFEPGSKWWRHLEWPIRIAVLDGSSIPQDIWGTELEEQAPEQQNVLGSMTQHIEMFAEMLNQHTQPPIPIADEDLIVPDSPD.

A DNA-binding region (zn(2)-C6 fungal-type) is located at residues cysteine 14–cysteine 41. Residues threonine 58 to threonine 119 form a disordered region. Residues serine 78 to arginine 95 show a composition bias toward low complexity. A Phosphothreonine modification is found at threonine 82. A phosphoserine mark is found at serine 92 and serine 102. The segment covering valine 107–threonine 119 has biased composition (polar residues). Phosphothreonine is present on threonine 217. Serine 305 carries the phosphoserine modification.

In terms of assembly, interacts with HOG1. Post-translationally, phosphorylation at Thr-82, Ser-92, Ser-102, thr-117 and ser-305 by HOG1 is required for regulating expression of ergosterol biosynthesis genes.

It is found in the nucleus. In terms of biological role, transcription factor that targets gene promoters containing 2 conserved CGAA repeat sequences. Positively regulates the expression of ergosterol biosynthesis genes including CYP51A and CYP51B encoding the sterol 14-alpha demethylase, and ERG6A and ERG6B encoding the sterol 24-C-methyltransferase. The protein is Zn(2)-C6 fungal-type transcription factor of Gibberella zeae (strain ATCC MYA-4620 / CBS 123657 / FGSC 9075 / NRRL 31084 / PH-1) (Wheat head blight fungus).